The following is a 770-amino-acid chain: Amyloid-beta precursor protein (770 aa).

The first 17 residues, 1–17, serve as a signal peptide directing secretion; the sequence is MLPGLALLLLAAWTARA. At 18 to 701 the chain is on the extracellular side; that stretch reads LEVPTDGNAG…AEDVGSNKGA (684 aa). The segment at 28 to 123 is GFLD subdomain; sequence LLAEPQIAMF…PYRCLVGEFV (96 aa). The 162-residue stretch at 28–189 folds into the E1 domain; that stretch reads LLAEPQIAMF…RGVEFVCCPL (162 aa). Disulfide bonds link Cys38/Cys62, Cys73/Cys117, Cys98/Cys105, Cys133/Cys187, Cys144/Cys174, and Cys158/Cys186. 96 to 110 contacts heparin; the sequence is NWCKRGRKQCKTHPH. The segment at 131–189 is cuBD subdomain; that stretch reads DKCKFLHQERMDVCETHLHWHTVAKETCSEKSTNLHDYGMLLPCGIDKFRGVEFVCCPL. Residues His147, His151, and Tyr168 each coordinate Cu(2+). The zinc-binding stretch occupies residues 181–188; the sequence is GVEFVCCP. Residues Glu183, Cys186, and Cys187 each coordinate Zn(2+). Acidic residues predominate over residues 194-207; sequence DNVDSADAEEDDSD. The segment at 194–284 is disordered; the sequence is DNVDSADAEE…TTTTTTESVE (91 aa). Ser198 is subject to Phosphoserine; by CK2. Ser206 is modified (phosphoserine; by CK1). Tyr217 and Tyr262 each carry sulfotyrosine. The segment covering 228–264 has biased composition (acidic residues); sequence VAEEEEVAEVEEEEADDDEDDEDGDEVEEEAEEPYEE. A compositionally biased stretch (low complexity) spans 268-281; sequence RTTSIATTTTTTTE. Cystine bridges form between Cys291/Cys341, Cys300/Cys324, and Cys316/Cys337. Residues 291 to 341 enclose the BPTI/Kunitz inhibitor domain; it reads CSEQAETGPCRAMISRWYFDVTEGKCAPFFYGGCGGNRNNFDTEEYCMAVC. The residue at position 336 (Tyr336) is a Sulfotyrosine. Positions 344–365 match the OX-2 motif; it reads VMSQSLRKTTREPLTRDPVKLP. The 192-residue stretch at 374–565 folds into the E2 domain; the sequence is AVDKYLETPG…EEIQDEVDEL (192 aa). The tract at residues 391–423 is heparin-binding; the sequence is FQKAKERLEAKHRERMSQVMREWEEAERQAKNL. Ser441 is modified (phosphoserine). Positions 491–522 are heparin-binding; that stretch reads FNMLKKYVRAEQKDRQHTLKHFEHVRMVDPKK. Tyr497 carries the phosphotyrosine modification. Residues 523 to 540 form a collagen-binding region; it reads AAQIRSQVMTHLRVIYER. 2 N-linked (GlcNAc...) asparagine glycosylation sites follow: Asn542 and Asn571. Cu(2+) is bound by residues His677, Tyr681, His684, and His685. Positions 677, 681, 684, and 685 each coordinate Zn(2+). The interaction with PSEN1 stretch occupies residues 695–722; sequence VGSNKGAIIGLMVGGVVIATVIVITLVM. A helical transmembrane segment spans residues 702–722; sequence IIGLMVGGVVIATVIVITLVM. The Cytoplasmic portion of the chain corresponds to 723-770; sequence LKKKQYTSIHHGVVEVDAAVTPEERHLSKMQQNGYENPTYKFFEQMQN. The Basolateral sorting signal signature appears at 724–734; it reads KKKQYTSIHHG. At Thr729 the chain carries Phosphothreonine. Ser730 bears the Phosphoserine; by APP-kinase I mark. Residues 732–751 form an interaction with G(o)-alpha region; it reads HHGVVEVDAAVTPEERHLSK. Thr743 carries the phosphothreonine; by CDK5 and MAPK10 modification. The required for the interaction with KIF5B and for anterograde transport in axons stretch occupies residues 756 to 770; that stretch reads GYENPTYKFFEQMQN. Tyr757 carries the post-translational modification Phosphotyrosine; by ABL1. Residues 757 to 762 carry the YENPXY motif; contains endocytosis signal motif; sequence YENPTY. Residue Lys763 forms a Glycyl lysine isopeptide (Lys-Gly) (interchain with G-Cter in ubiquitin) linkage.

This sequence belongs to the APP family. Binds, via its C-terminus, to the PID domain of several cytoplasmic proteins, including APBB family members, the APBA family, MAPK8IP1, SHC1 and NUMB and DAB1. Binding to DAB1 inhibits its serine phosphorylation. Interacts (via NPXY motif) with DAB2 (via PID domain); the interaction is impaired by tyrosine phosphorylation of the NPXY motif. Also interacts with GPCR-like protein BPP, APPBP1, IB1, KNS2 (via its TPR domains), APPBP2 (via BaSS) and DDB1. In vitro, it binds MAPT via the MT-binding domains. Associates with microtubules in the presence of ATP and in a kinesin-dependent manner. Interacts, through a C-terminal domain, with GNAO1. Amyloid-beta protein 42 binds CHRNA7 in hippocampal neurons. Amyloid-beta associates with HADH2. Interacts with CPEB1, ANKS1B and AGER. Interacts with ITM2B. Interacts with ITM2C. Interacts with IDE. Can form homodimers; dimerization is enhanced in the presence of Cu(2+) ions. Can form homodimers; this is promoted by heparin binding. Amyloid-beta protein 40 interacts with S100A9. CTF-alpha product of APP interacts with GSAP. Isoform APP695 interacts with SORL1 (via N-terminal ectodomain); this interaction retains APP in the trans-Golgi network and reduces processing into soluble APP-alpha and amyloid-beta peptides. Isoform APP770 interacts with SORL1. The C99 fragment also interacts with SORL1. Interacts with PLD3. Interacts with VDAC1. Interacts with NSG1; could regulate APP processing. Amyloid-beta protein 42 interacts with FPR2. Interacts (via transmembrane region) with PSEN1; the interaction is direct. Interacts with LRRK2. Interacts (via cytoplasmic domain) with KIF5B. Interacts (via C-terminus) with APBB2/FE65L1 (via C-terminus). Interacts (via intracellular domain) with APBB3. In terms of processing, proteolytically processed under normal cellular conditions. Cleavage either by alpha-secretase, beta-secretase or theta-secretase leads to generation and extracellular release of soluble APP peptides, S-APP-alpha and S-APP-beta, and the retention of corresponding membrane-anchored C-terminal fragments, C80, C83 and C99. Subsequent processing of C80 and C83 by gamma-secretase yields P3 peptides. This is the major secretory pathway and is non-amyloidogenic. Alternatively, presenilin/nicastrin-mediated gamma-secretase processing of C99 releases the amyloid-beta proteins, amyloid-beta protein 40 and amyloid-beta protein 42, major components of amyloid plaques, and the cytotoxic C-terminal fragments, gamma-CTF(50), gamma-CTF(57) and gamma-CTF(59). PSEN1 cleavage is more efficient with C83 than with C99 as substrate (in vitro). Amyloid-beta protein 40 and Amyloid-beta protein 42 are cleaved by ACE. Many other minor amyloid-beta peptides, amyloid-beta 1-X peptides, are found in cerebral spinal fluid (CSF) including the amyloid-beta X-15 peptides, produced from the cleavage by alpha-secretase. Post-translationally, proteolytically cleaved by caspases during neuronal apoptosis. Cleavage at Asp-739 by either caspase-3, -8 or -9 results in the production of the neurotoxic C31 peptide and the increased production of amyloid-beta peptides. N- and O-glycosylated. In terms of processing, phosphorylation in the C-terminal on tyrosine, threonine and serine residues is neuron-specific. Phosphorylation can affect APP processing, neuronal differentiation and interaction with other proteins. Phosphorylated on Thr-743 in neuronal cells by Cdc5 kinase and Mapk10, in dividing cells by Cdc2 kinase in a cell-cycle dependent manner with maximal levels at the G2/M phase and, in vitro, by GSK-3-beta. The Thr-743 phosphorylated form causes a conformational change which reduces binding of Fe65 family members. In dopaminergic (DA) neurons, phosphorylation on Thr-743 by LRKK2 promotes the production and the nuclear translocation of the APP intracellular domain (AICD) which induces DA neuron apoptosis. Phosphorylation on Tyr-757 is required for SHC binding. Phosphorylated in the extracellular domain by casein kinases on both soluble and membrane-bound APP. This phosphorylation is inhibited by heparin. Post-translationally, trophic-factor deprivation triggers the cleavage of surface APP by beta-secretase to release sAPP-beta which is further cleaved to release an N-terminal fragment of APP (N-APP). Amyloid-beta peptides are degraded by IDE. In terms of processing, sulfated on tyrosine residues.

It localises to the cell membrane. Its subcellular location is the membrane. The protein resides in the perikaryon. The protein localises to the cell projection. It is found in the growth cone. It localises to the clathrin-coated pit. Its subcellular location is the early endosome. The protein resides in the cytoplasmic vesicle. The protein localises to the endoplasmic reticulum. It is found in the golgi apparatus. It localises to the secreted. Its subcellular location is the cell surface. The protein resides in the nucleus. The protein localises to the cytoplasm. Functionally, functions as a cell surface receptor and performs physiological functions on the surface of neurons relevant to neurite growth, neuronal adhesion and axonogenesis. Interaction between APP molecules on neighboring cells promotes synaptogenesis. Involved in cell mobility and transcription regulation through protein-protein interactions. Can promote transcription activation through binding to APBB1-KAT5 and inhibit Notch signaling through interaction with Numb. Couples to apoptosis-inducing pathways such as those mediated by G(o) and JIP. Inhibits G(o)-alpha ATPase activity. Acts as a kinesin I membrane receptor, mediating the axonal transport of beta-secretase and presenilin 1. By acting as a kinesin I membrane receptor, plays a role in axonal anterograde transport of cargo towards synapses in axons. May be involved in copper homeostasis/oxidative stress through copper ion reduction. In vitro, copper-metallated APP induces neuronal death directly or is potentiated through Cu(2+)-mediated low-density lipoprotein oxidation. Can regulate neurite outgrowth through binding to components of the extracellular matrix such as heparin and collagen I and IV. Induces a AGER-dependent pathway that involves activation of p38 MAPK, resulting in internalization of amyloid-beta peptide and mitochondrial dysfunction in cultured cortical neurons. Provides Cu(2+) ions for GPC1 which are required for release of nitric oxide (NO) and subsequent degradation of the heparan sulfate chains on GPC1. Amyloid-beta peptides are lipophilic metal chelators with metal-reducing activity. Binds transient metals such as copper, zinc and iron. In terms of biological role, the gamma-CTF peptides as well as the caspase-cleaved peptides, including C31, are potent enhancers of neuronal apoptosis. The protein is Amyloid-beta precursor protein of Macaca fascicularis (Crab-eating macaque).